We begin with the raw amino-acid sequence, 100 residues long: Large ribosomal subunit protein uL23 (100 aa).

Belongs to the universal ribosomal protein uL23 family. In terms of assembly, part of the 50S ribosomal subunit. Contacts protein L29, and trigger factor when it is bound to the ribosome.

One of the early assembly proteins it binds 23S rRNA. One of the proteins that surrounds the polypeptide exit tunnel on the outside of the ribosome. Forms the main docking site for trigger factor binding to the ribosome. In Shewanella sp. (strain MR-4), this protein is Large ribosomal subunit protein uL23.